A 168-amino-acid polypeptide reads, in one-letter code: 2-C-methyl-D-erythritol 2,4-cyclodiphosphate synthase (168 aa).

A divalent metal cation-binding residues include Asp-13 and His-15. 4-CDP-2-C-methyl-D-erythritol 2-phosphate-binding positions include 13–15 (DVH) and 39–40 (HS). His-47 lines the a divalent metal cation pocket. 4-CDP-2-C-methyl-D-erythritol 2-phosphate contacts are provided by residues 61-63 (DIG), 66-70 (FPDTD), Phe-144, and Lys-147.

This sequence belongs to the IspF family. As to quaternary structure, homotrimer. A divalent metal cation is required as a cofactor.

The enzyme catalyses 4-CDP-2-C-methyl-D-erythritol 2-phosphate = 2-C-methyl-D-erythritol 2,4-cyclic diphosphate + CMP. It participates in isoprenoid biosynthesis; isopentenyl diphosphate biosynthesis via DXP pathway; isopentenyl diphosphate from 1-deoxy-D-xylulose 5-phosphate: step 4/6. In terms of biological role, involved in the biosynthesis of isopentenyl diphosphate (IPP) and dimethylallyl diphosphate (DMAPP), two major building blocks of isoprenoid compounds. Catalyzes the conversion of 4-diphosphocytidyl-2-C-methyl-D-erythritol 2-phosphate (CDP-ME2P) to 2-C-methyl-D-erythritol 2,4-cyclodiphosphate (ME-CPP) with a corresponding release of cytidine 5-monophosphate (CMP). In Cupriavidus metallidurans (strain ATCC 43123 / DSM 2839 / NBRC 102507 / CH34) (Ralstonia metallidurans), this protein is 2-C-methyl-D-erythritol 2,4-cyclodiphosphate synthase.